Reading from the N-terminus, the 195-residue chain is Inner membrane-spanning protein YciB (195 aa).

5 consecutive transmembrane segments (helical) span residues 34 to 54, 65 to 85, 88 to 108, 131 to 151, and 160 to 180; these read IYGA…ALWL, FTLG…EDTF, WKAP…HFIG, LNIA…YVVF, and FKVF…GLFL.

The protein belongs to the YciB family.

It localises to the cell inner membrane. Its function is as follows. Plays a role in cell envelope biogenesis, maintenance of cell envelope integrity and membrane homeostasis. The polypeptide is Inner membrane-spanning protein YciB (Pseudomonas aeruginosa (strain LESB58)).